The sequence spans 380 residues: Glutamine synthetase, chloroplastic (380 aa).

Residues 35–125 (MAAEYIWADG…VMCEVFAPDG (91 aa)) enclose the GS beta-grasp domain. The 249-residue stretch at 132 to 380 (TRAKLREIID…RLLIKTVLKG (249 aa)) folds into the GS catalytic domain.

The protein belongs to the glutamine synthetase family. In terms of assembly, homooctamer.

Its subcellular location is the plastid. It localises to the chloroplast. It carries out the reaction L-glutamate + NH4(+) + ATP = L-glutamine + ADP + phosphate + H(+). The polypeptide is Glutamine synthetase, chloroplastic (GLN2) (Chlamydomonas reinhardtii (Chlamydomonas smithii)).